The primary structure comprises 43 residues: Antimicrobial protein PcfHb (43 aa).

In terms of assembly, possible monomer. As to expression, expressed in mucus-secreting tissues.

It localises to the secreted. Its function is as follows. Shows antimicrobial activity against M.luteus (MIC=4 uM) and E.coli (MIC=12 uM), as well as against the yeast C.tropicalis (MIC=4 uM). Shows a pro-inflammatory effect, since the topical application of the protein induces an increase of cellular recruitment characterized by an increase in the number of leukocyte rolling. Does not show hemolytic activity on human erythrocytes (at doses up to 100 uM). This Potamotrygon cf. henlei (Freshwater stingray) protein is Antimicrobial protein PcfHb.